The sequence spans 450 residues: 3-keto-steroid reductase erg27 (450 aa).

NADP(+) contacts are provided by Leu-25, Thr-53, and Lys-59. Catalysis depends on proton donor residues Ser-215 and Tyr-238. NADP(+) contacts are provided by Tyr-238, Lys-242, and Thr-296. Lys-242 (lowers pKa of active site Tyr) is an active-site residue.

This sequence belongs to the short-chain dehydrogenases/reductases (SDR) family. ERG27 subfamily. As to quaternary structure, heterotetramer of erg25, erg26, erg27 and erg28. Erg28 acts as a scaffold to tether erg27 and other 4,4-demethylation-related enzymes, forming a demethylation enzyme complex, in the endoplasmic reticulum.

The protein resides in the endoplasmic reticulum membrane. It localises to the lipid droplet. It participates in steroid metabolism; ergosterol biosynthesis. Functionally, sterol-C4-methyl oxidase; part of the third module of ergosterol biosynthesis pathway that includes the late steps of the pathway. Erg27 is a catalytic component of the C-4 demethylation complex that catalyzes the conversion of 4,4-dimethylfecosterol into fecosterol via 4-methylfecosterol. The third module or late pathway involves the ergosterol synthesis itself through consecutive reactions that mainly occur in the endoplasmic reticulum (ER) membrane. Firstly, the squalene synthase erg9 catalyzes the condensation of 2 farnesyl pyrophosphate moieties to form squalene, which is the precursor of all steroids. Squalene synthase is crucial for balancing the incorporation of farnesyl diphosphate (FPP) into sterol and nonsterol isoprene synthesis. Secondly, squalene is converted into lanosterol by the consecutive action of the squalene epoxidase erg1 and the lanosterol synthase erg7. Then, the delta(24)-sterol C-methyltransferase erg6 methylates lanosterol at C-24 to produce eburicol. Eburicol is the substrate of the sterol 14-alpha demethylase encoded by cyp51A and cyp51B, to yield 4,4,24-trimethyl ergosta-8,14,24(28)-trienol. The C-14 reductase erg24 then reduces the C14=C15 double bond which leads to 4,4-dimethylfecosterol. A sequence of further demethylations at C-4, involving the C-4 demethylation complex containing the C-4 methylsterol oxidases erg25A or erg25B, the sterol-4-alpha-carboxylate 3-dehydrogenase erg26 and the 3-keto-steroid reductase erg27, leads to the production of fecosterol via 4-methylfecosterol. The C-8 sterol isomerase erg2 then catalyzes the reaction which results in unsaturation at C-7 in the B ring of sterols and thus converts fecosterol to episterol. The sterol-C5-desaturase erg3B then catalyzes the introduction of a C-5 double bond in the B ring to produce 5-dehydroepisterol. The 2 other sterol-C5-desaturases, erg3A and erg3C, seem to be less important in ergosterol biosynthesis. The C-22 sterol desaturase erg5 further converts 5-dehydroepisterol into ergosta-5,7,22,24(28)-tetraen-3beta-ol by forming the C-22(23) double bond in the sterol side chain. Finally, ergosta-5,7,22,24(28)-tetraen-3beta-ol is substrate of the C-24(28) sterol reductases erg4A and erg4B to produce ergosterol. Possible alternative sterol biosynthetic pathways might exist from fecosterol to ergosterol, depending on the activities of the erg3 isoforms. The chain is 3-keto-steroid reductase erg27 from Aspergillus fumigatus (strain ATCC MYA-4609 / CBS 101355 / FGSC A1100 / Af293) (Neosartorya fumigata).